We begin with the raw amino-acid sequence, 505 residues long: ATP synthase subunit alpha (505 aa).

169-176 serves as a coordination point for ATP; that stretch reads GDRQTGKT.

Belongs to the ATPase alpha/beta chains family. As to quaternary structure, F-type ATPases have 2 components, CF(1) - the catalytic core - and CF(0) - the membrane proton channel. CF(1) has five subunits: alpha(3), beta(3), gamma(1), delta(1), epsilon(1). CF(0) has three main subunits: a(1), b(2) and c(9-12). The alpha and beta chains form an alternating ring which encloses part of the gamma chain. CF(1) is attached to CF(0) by a central stalk formed by the gamma and epsilon chains, while a peripheral stalk is formed by the delta and b chains.

The protein localises to the cell membrane. The catalysed reaction is ATP + H2O + 4 H(+)(in) = ADP + phosphate + 5 H(+)(out). Functionally, produces ATP from ADP in the presence of a proton gradient across the membrane. The alpha chain is a regulatory subunit. The protein is ATP synthase subunit alpha of Alkaliphilus oremlandii (strain OhILAs) (Clostridium oremlandii (strain OhILAs)).